Reading from the N-terminus, the 1553-residue chain is Dual oxidase 1 (1553 aa).

A signal peptide spans 1 to 21 (MGFRLALAWTLLVGPWMPMGA). Residues 22–596 (RNSISWEVQR…YFKGSGFGFG (575 aa)) lie on the Extracellular side of the membrane. Residues 26-593 (SWEVQRFDGW…MRDYFKGSGF (568 aa)) are peroxidase-like; mediates peroxidase activity. N-linked (GlcNAc...) asparagine glycans are attached at residues asparagine 94, asparagine 342, asparagine 354, and asparagine 534. A helical transmembrane segment spans residues 597–617 (VTIGTLCCFPLVSLLSAWIVA). The Cytoplasmic portion of the chain corresponds to 618 to 1046 (QLRRRNFKRL…KRFVENYRRH (429 aa)). 3 consecutive EF-hand domains span residues 815–850 (PQDM…FMKG), 851–886 (SPEE…FIEI), and 895–930 (QLTE…HDSE). Ca(2+) contacts are provided by aspartate 828, aspartate 830, asparagine 832, tyrosine 834, glutamate 839, aspartate 864, aspartate 866, asparagine 868, and glutamate 875. The interval 956 to 1250 (YISQEKLCPS…GSFALIQLPR (295 aa)) is interaction with TXNDC11. The helical transmembrane segment at 1047-1067 (IGCLAVFYTIAGGLFLERAYY) threads the bilayer. At 1068 to 1082 (YAFAAHHMGITDTTR) the chain is on the extracellular side. The helical transmembrane segment at 1083–1103 (VGIILSRGTAASISFMFSYIL) threads the bilayer. The Ferric oxidoreductase domain maps to 1089–1271 (RGTAASISFM…YVGDKLVSLS (183 aa)). The Cytoplasmic portion of the chain corresponds to 1104–1138 (LTMCRNLITFLRETFLNRYVPFDAAVDFHRLIAST). Residues 1139–1159 (AIILTVLHSAGHVVNVYLFSI) traverse the membrane as a helical segment. At 1160–1190 (SPLSVLSCLFPGLFHDNGSEFPQKYYWWFFQ) the chain is on the extracellular side. The chain crosses the membrane as a helical span at residues 1191–1211 (TVPGLTGVMLLLILAIMYVFA). The Cytoplasmic segment spans residues 1212 to 1228 (SHHFRRCSFRGFWLTHH). Residues 1229 to 1249 (LYILLYMLLIIHGSFALIQLP) form a helical membrane-spanning segment. Position 1250 (arginine 1250) is a topological domain, extracellular. Residues 1251 to 1271 (FHIFFLVPALIYVGDKLVSLS) form a helical membrane-spanning segment. The FAD-binding FR-type domain maps to 1272-1378 (RKKVEISVVK…DGPFGEGHQE (107 aa)). Over 1272–1553 (RKKVEISVVK…THFSHHYENF (282 aa)) the chain is Cytoplasmic.

The protein in the N-terminal section; belongs to the peroxidase family. Interacts with TXNDC11, TPO and CYBA. In terms of processing, N-glycosylated. As to expression, specifically expressed in thyroid.

Its subcellular location is the apical cell membrane. It catalyses the reaction NADH + O2 + H(+) = H2O2 + NAD(+). It carries out the reaction NADPH + O2 + H(+) = H2O2 + NADP(+). It functions in the pathway hormone biosynthesis; thyroid hormone biosynthesis. With respect to regulation, the NADPH oxidase activity is calcium-dependent. Peroxidase activity is inhibited by aminobenzohydrazide. Functionally, generates hydrogen peroxide which is required for the activity of thyroid peroxidase/TPO and lactoperoxidase/LPO. Plays a role in thyroid hormones synthesis and lactoperoxidase-mediated antimicrobial defense at the surface of mucosa. May have its own peroxidase activity through its N-terminal peroxidase-like domain. This Sus scrofa (Pig) protein is Dual oxidase 1 (DUOX1).